The following is a 55-amino-acid chain: uncharacterized protein (55 aa).

The chain crosses the membrane as a helical span at residues 24–46 (LFIIFFTYSYYYCGFLQSFNYII).

Its subcellular location is the membrane. This is an uncharacterized protein from Dictyostelium discoideum (Social amoeba).